We begin with the raw amino-acid sequence, 439 residues long: MTGSTAAARELKAGGSLKGAVRVPGDKSISHRALLFGAIADGVTTIEGLLPAEDPISTAACLRAMGAEISPIGEGDLIRVTGVGLDGLQEPDTVLDCGNSGTTMRLMLGLLAGRDGRHFVLTGDASLRRRPMQRVGQPLAMLGAEVRGRGDGNYAPLAVQGRRLRGAVVGTPVASAQVKSALLLAALTADGPTTVIEPAPSRDHSERMLKAFGADLTVGGEMGRHISVKPGARLQGQHVVVPGDISSAAFWLVAGALVPGADLTVENVGLNPTRTGVLDVLEQMGAKIEVLNRRDVAGEPVGDLHVTSGPLQPFRFGEEIMPRLVDEVPILTVAACFCEGESHISGAAELRVKETDRLAVMARQLKTMGADLDETPDGLVIRGGRPLRGAALDSETDHRVAMSLAVASLLASGDSTLERSDAAAVSYPSFWDDLARLRI.

Lys-27, Ser-28, and Arg-32 together coordinate 3-phosphoshikimate. Lys-27 contributes to the phosphoenolpyruvate binding site. Positions 101 and 130 each coordinate phosphoenolpyruvate. Residues Ser-175, Gln-177, Asp-326, and Lys-353 each contribute to the 3-phosphoshikimate site. Gln-177 contributes to the phosphoenolpyruvate binding site. Asp-326 functions as the Proton acceptor in the catalytic mechanism. 2 residues coordinate phosphoenolpyruvate: Arg-357 and Arg-399.

This sequence belongs to the EPSP synthase family. As to quaternary structure, monomer.

It is found in the cytoplasm. It catalyses the reaction 3-phosphoshikimate + phosphoenolpyruvate = 5-O-(1-carboxyvinyl)-3-phosphoshikimate + phosphate. Its pathway is metabolic intermediate biosynthesis; chorismate biosynthesis; chorismate from D-erythrose 4-phosphate and phosphoenolpyruvate: step 6/7. Its function is as follows. Catalyzes the transfer of the enolpyruvyl moiety of phosphoenolpyruvate (PEP) to the 5-hydroxyl of shikimate-3-phosphate (S3P) to produce enolpyruvyl shikimate-3-phosphate and inorganic phosphate. This chain is 3-phosphoshikimate 1-carboxyvinyltransferase, found in Synechococcus sp. (strain WH7803).